Consider the following 46-residue polypeptide: Light-harvesting protein B-800/850 beta 2 chain (46 aa).

The Cytoplasmic portion of the chain corresponds to 2 to 25 (AERSLSGLTEEEAVAVHAQFQTTF). A bacteriochlorophyll contacts are provided by His18 and His36. The helical transmembrane segment at 26-46 (SAFIVLAAVAHVLVWVWKPWF) threads the bilayer.

This sequence belongs to the antenna complex beta subunit family. The core complex is formed by different alpha and beta chains, binding bacteriochlorophyll molecules, and arranged most probably in tetrameric structures disposed around the reaction center.

It is found in the cell inner membrane. Antenna complexes are light-harvesting systems, which transfer the excitation energy to the reaction centers. The protein is Light-harvesting protein B-800/850 beta 2 chain (B2) of Magnetospirillum molischianum (Rhodospirillum molischianum).